Here is a 199-residue protein sequence, read N- to C-terminus: MASLWCGNLLRLGSGLSMSCLALSVLLLAQLTGAAKNFEDVRCKCICPPYKENPGHIYNKNISQKDCDCLHVVEPMPVRGPDVEAYCLRCECKYEERSSVTIKVTIIIYLSILGLLLLYMVYLTLVEPILKRRLFGHSQLLQSDDDVGDHQPFANAHDVLARSRSRANVLNKVEYAQQRWKLQVQEQRKSVFDRHVVLS.

An N-terminal signal peptide occupies residues 1–34; sequence MASLWCGNLLRLGSGLSMSCLALSVLLLAQLTGA. Asn61 carries N-linked (GlcNAc...) asparagine glycosylation. A helical transmembrane segment spans residues 106–126; that stretch reads IIIYLSILGLLLLYMVYLTLV. 2 positions are modified to phosphoserine: Ser143 and Ser190.

The protein belongs to the TMEM9 family. In terms of processing, N-glycosylated.

It is found in the lysosome membrane. It localises to the early endosome membrane. In terms of biological role, enhances production of pro-inflammatory cytokines induced by TNF, IL1B, and TLR ligands. Has a role in TNF activation of both the NF-kappaB and MAPK pathways. The sequence is that of Transmembrane protein 9B (Tmem9b) from Mus musculus (Mouse).